The sequence spans 2083 residues: Non-reducing polyketide synthase curS2 (2083 aa).

Residues 9-246 form an N-terminal acylcarrier protein transacylase domain (SAT) region; the sequence is LLFGDVTDPW…NELDIHALQH (238 aa). The 433-residue stretch at 366 to 798 folds into the Ketosynthase family 3 (KS3) domain; it reads RDGIAIVGMA…GGNACLLLED (433 aa). Residues C543, H678, and H717 each act as for beta-ketoacyl synthase activity in the active site. Residues 895–1201 are malonyl-CoA:ACP transacylase (MAT) domain; that stretch reads VFVFTGQGSH…THTLQPNTHN (307 aa). S986 (for acyl/malonyl transferase activity) is an active-site residue. Positions 1276–1415 are N-terminal hotdog fold; that stretch reads AQYLVSKSSS…DPAKTQADWD (140 aa). The 310-residue stretch at 1276 to 1585 folds into the PKS/mFAS DH domain; it reads AQYLVSKSSS…YQELPRVTWK (310 aa). The product template (PT) domain stretch occupies residues 1285-1581; that stretch reads SPKVQVVFRA…IDLRYQELPR (297 aa). Residues 1437-1585 form a C-terminal hotdog fold region; that stretch reads GHRMQPEVFY…YQELPRVTWK (149 aa). Residues 1637–1714 form the Carrier domain; sequence DFDEGLVDAI…DLRRAFGANK (78 aa). S1674 carries the O-(pantetheine 4'-phosphoryl)serine modification. Residues 1710–1790 are disordered; sequence FGANKPKTSK…KMDETDTSPA (81 aa). Positions 1718–1736 are enriched in low complexity; the sequence is SKPQPGSTTPSSSQSSIPS. Positions 1745–1754 are enriched in polar residues; sequence MSDTASSLGS. Over residues 1771–1784 the composition is skewed to basic and acidic residues; the sequence is LEPKPNHHLGKMDE. The tract at residues 1811 to 2058 is thioesterase (TE) domain; the sequence is MMADGTGTIA…LSVAGDHLDL (248 aa). H2065 functions as the For thioesterase activity in the catalytic mechanism.

The protein operates within mycotoxin biosynthesis. In terms of biological role, non-reducing polyketide synthase; part of the gene cluster that mediates the biosynthesis of 10,11-dehydrocurvularin, a prevalent fungal phytotoxin with heat shock response and immune-modulatory activities. The highly reducing polyketide synthase curS1 is responsible for biosynthesis up to the tetraketide stage. The non-reducing polyketide synthase curS2 then conducts four additional chain extension cycles, producing the unreduced part of the nascent octaketide from C-1 to C-8 in 10,11-dehydrocurvularin. The polypeptide is Non-reducing polyketide synthase curS2 (Aspergillus terreus).